Here is an 876-residue protein sequence, read N- to C-terminus: Bifunctional uridylyltransferase/uridylyl-removing enzyme (876 aa).

Residues 1–332 (MPYQSPITFQ…NNGEEAEAVI (332 aa)) are uridylyltransferase. Residues 333–692 (IDDDFQRRGN…LSKKATRGGT (360 aa)) form a uridylyl-removing region. Residues 451–573 (VDEHSIRLLK…VRDEERLEYL (123 aa)) enclose the HD domain. ACT domains follow at residues 693–777 (EVFI…RIPR) and 800–876 (LMEF…PSAQ).

It belongs to the GlnD family. Mg(2+) serves as cofactor.

The catalysed reaction is [protein-PII]-L-tyrosine + UTP = [protein-PII]-uridylyl-L-tyrosine + diphosphate. It catalyses the reaction [protein-PII]-uridylyl-L-tyrosine + H2O = [protein-PII]-L-tyrosine + UMP + H(+). Uridylyltransferase (UTase) activity is inhibited by glutamine, while glutamine activates uridylyl-removing (UR) activity. Its function is as follows. Modifies, by uridylylation and deuridylylation, the PII regulatory proteins (GlnB and homologs), in response to the nitrogen status of the cell that GlnD senses through the glutamine level. Under low glutamine levels, catalyzes the conversion of the PII proteins and UTP to PII-UMP and PPi, while under higher glutamine levels, GlnD hydrolyzes PII-UMP to PII and UMP (deuridylylation). Thus, controls uridylylation state and activity of the PII proteins, and plays an important role in the regulation of nitrogen assimilation and metabolism. The protein is Bifunctional uridylyltransferase/uridylyl-removing enzyme of Vibrio cholerae serotype O1 (strain ATCC 39315 / El Tor Inaba N16961).